Here is a 289-residue protein sequence, read N- to C-terminus: 4-diphosphocytidyl-2-C-methyl-D-erythritol kinase (289 aa).

Lys10 is an active-site residue. ATP is bound at residue 94–104; sequence PVAAGLAGGSS. The active site involves Asp136.

The protein belongs to the GHMP kinase family. IspE subfamily.

The catalysed reaction is 4-CDP-2-C-methyl-D-erythritol + ATP = 4-CDP-2-C-methyl-D-erythritol 2-phosphate + ADP + H(+). The protein operates within isoprenoid biosynthesis; isopentenyl diphosphate biosynthesis via DXP pathway; isopentenyl diphosphate from 1-deoxy-D-xylulose 5-phosphate: step 3/6. Functionally, catalyzes the phosphorylation of the position 2 hydroxy group of 4-diphosphocytidyl-2C-methyl-D-erythritol. The sequence is that of 4-diphosphocytidyl-2-C-methyl-D-erythritol kinase from Bacillus mycoides (strain KBAB4) (Bacillus weihenstephanensis).